Consider the following 168-residue polypeptide: MNLQQQLSHCQQHQHLLQLTHFNHETAWQLGEKIKQQAELQGVALAINIRVNGQTLFSYAMPGTCAENADWLRRKRNVVELLGTSSYAAGLMLQQRQTSLEERYGVSLRDYAALGGGFPLQVKQAGIIGSVNVSGAPHLDDHNLLLQVLADFIGLPAGSIELLAPLTE.

It belongs to the UPF0303 family.

This chain is UPF0303 protein YE1367, found in Yersinia enterocolitica serotype O:8 / biotype 1B (strain NCTC 13174 / 8081).